Reading from the N-terminus, the 512-residue chain is Opioid growth factor receptor-like protein 1 (512 aa).

Disordered regions lie at residues Met-1–Thr-72, Ile-323–Lys-469, and Ser-488–Thr-512. 2 stretches are compositionally biased toward acidic residues: residues Gly-28–Glu-54 and Thr-62–Gly-71. The segment covering Asp-328–Ala-337 has biased composition (basic and acidic residues). The segment covering Gln-347 to Lys-361 has biased composition (basic residues). Residues Thr-408–Thr-421 are compositionally biased toward polar residues. Positions Arg-449 to Cys-468 are enriched in basic and acidic residues. Over residues Ser-490 to Thr-499 the composition is skewed to polar residues.

This sequence belongs to the opioid growth factor receptor family.

This chain is Opioid growth factor receptor-like protein 1 (ogfrl1), found in Xenopus tropicalis (Western clawed frog).